Here is a 485-residue protein sequence, read N- to C-terminus: Pre-glycoprotein polyprotein GP complex (485 aa).

The N-myristoyl glycine; by host moiety is linked to residue Gly-2. Residues 2-17 (GQFISFMQEIPTFLQE) are Extracellular-facing. The chain crosses the membrane as a helical span at residues 18-33 (ALNIALVAVSLIAIIK). Topologically, residues 34–58 (GVVNLYKSGLFQFFVFLALAGRSCT) are cytoplasmic. Cys-57 contacts Zn(2+). Topologically, residues 59 to 424 (EEAFKIGLHT…QGKTPLTLVD (366 aa)) are extracellular. 6 disulfide bridges follow: Cys-92–Cys-226, Cys-135–Cys-164, Cys-207–Cys-213, Cys-271–Cys-284, Cys-293–Cys-302, and Cys-356–Cys-377. Asn-95 and Asn-105 each carry an N-linked (GlcNAc...) asparagine; by host glycan. N-linked (GlcNAc...) asparagine; by host glycans are attached at residues Asn-166 and Asn-178. The segment at 250-286 (LKAFFSWSLTDSSGKDTPGGYCLEEWMLVAAKMKCFG) is fusion. Positions 287–355 (NTAVAKCNLN…KIRELMSVPY (69 aa)) are HR1. N-linked (GlcNAc...) asparagine; by host glycans are attached at residues Asn-357, Asn-365, Asn-382, and Asn-387. An HR2 region spans residues 360–423 (KFWYVNHTLS…RQGKTPLTLV (64 aa)). The chain crosses the membrane as a helical span at residues 425-445 (ICFWSTVFFTASLFLHLVGIP). The Cytoplasmic segment spans residues 446–485 (THRHIRGEACPLPHRLNSLGGCRCGKYPNLKKPTVWRRGH). Zn(2+) is bound by residues His-447, His-449, Cys-455, His-459, Cys-467, Cys-469, and His-485.

Belongs to the arenaviridae GPC protein family. Interacts with glycoprotein G2. Part of the GP complex (GP-C) together with glycoprotein G1 and glycoprotein G2. The GP-complex interacts with protein Z, which interacts with ribonucleocapsid; these interactions may induce virion budding. In terms of assembly, homotrimer; disulfide-linked. In pre-fusion state, G1 homotrimers bind G2 homotrimers via ionic interactions. Part of the GP complex (GP-C) together with glycoprotein G2 and the stable signal peptide. Interacts with host TFRC. The GP-complex interacts with protein Z, which interacts with ribonucleocapsid; these interactions may induce virion budding. As to quaternary structure, homotrimer. Interacts with the stable signal peptide. In pre-fusion state, G2 homotrimers bind G1 homotrimers via ionic interactions. Part of the GP complex (GP-C) together with glycoprotein G1 and the stable signal peptide. Acidification in the endosome triggers rearrangements, which ultimately leads to a 6 helix bundle formed by the two heptad repeat domains (HR1 and HR2) in post-fusion state. The GP-complex interacts with protein Z, which interacts with ribonucleocapsid; these interactions may induce virion budding. Specific enzymatic cleavages in vivo yield mature proteins. GP-C polyprotein is cleaved in the endoplasmic reticulum by the host protease MBTPS1. Only cleaved glycoprotein is incorporated into virions. In terms of processing, the SSP remains stably associated with the GP complex following cleavage by signal peptidase and plays crucial roles in the trafficking of GP through the secretory pathway. Post-translationally, myristoylation is necessary for GP2-mediated fusion activity.

The protein localises to the virion membrane. It localises to the host endoplasmic reticulum membrane. It is found in the host Golgi apparatus membrane. Its subcellular location is the host cell membrane. In terms of biological role, functions as a cleaved signal peptide that is retained as the third component of the GP complex (GP-C). Helps to stabilize the spike complex in its native conformation. The SSP is required for efficient glycoprotein expression, post-translational maturation cleavage of G1 and G2, glycoprotein transport to the cell surface plasma membrane, formation of infectious virus particles, and acid pH-dependent glycoprotein-mediated cell fusion. Its function is as follows. Forms the virion spikes together with glycoprotein G2. The glycoprotein spike trimers are connected to the underlying matrix. Mediates virus attachment to host TFRC. This attachment induces virion internalization predominantly through clathrin-mediated endocytosis. Forms the virion spikes together with glycoprotein G1. The glycoprotein spike trimers are connected to the underlying matrix. Class I viral fusion protein that directs fusion of viral and host endosomal membranes, leading to delivery of the nucleocapsid into the cytoplasm. Membrane fusion is mediated by irreversible conformational changes induced by acidification. This Junin mammarenavirus (JUNV) protein is Pre-glycoprotein polyprotein GP complex.